We begin with the raw amino-acid sequence, 135 residues long: MKIGALAKALGCTVETIRYYEQQGLIPPPKRTSGNFRQYNEEHLQRLSFICNCRNLDISLSEIKSLLNLENASKQQAEEINRVLDKHIKEVATRIHELAHLRMKLIELREKTVSNDEDPMKLLLQHSGVKFVRLK.

Residues 1–69 enclose the HTH merR-type domain; that stretch reads MKIGALAKAL…LSEIKSLLNL (69 aa). The segment at residues 4-23 is a DNA-binding region (H-T-H motif); it reads GALAKALGCTVETIRYYEQQ.

Functionally, transcriptional regulator. The polypeptide is HTH-type transcriptional regulator ZntR homolog (zntR) (Haemophilus influenzae (strain ATCC 51907 / DSM 11121 / KW20 / Rd)).